The primary structure comprises 212 residues: Peroxisomal membrane protein 4 (212 aa).

The N-linked (GlcNAc...) asparagine glycan is linked to Asn57. A run of 2 helical transmembrane segments spans residues 97-117 (GKTY…LVFG) and 153-173 (WDPF…LFEY). Asn206 carries an N-linked (GlcNAc...) asparagine glycan.

It belongs to the peroxisomal membrane protein PXMP2/4 family. As to quaternary structure, interacts with PEX19. Expressed in normal prostate epithelial cells, and androgen-sensitive prostate adenocarcinoma cells. Not expressed in androgen-insensitive prostate adenocarcinoma cells.

The protein localises to the peroxisome membrane. The polypeptide is Peroxisomal membrane protein 4 (PXMP4) (Homo sapiens (Human)).